The chain runs to 503 residues: Protein-cysteine N-palmitoyltransferase HHAT-like protein (503 aa).

8 helical membrane-spanning segments follow: residues 12-31 (LGLY…RGLL), 65-87 (WVMW…VLFA), 100-122 (WMYA…LLLL), 127-149 (MVLY…LASL), 250-272 (AGLS…ILTI), 287-309 (LAGL…FGVV), 426-445 (VRAL…NLVS), and 460-482 (ILTG…VQLV).

The protein belongs to the membrane-bound acyltransferase family. HHAT subfamily. As to quaternary structure, interacts with SHH.

Its subcellular location is the endoplasmic reticulum membrane. Functionally, negatively regulates N-terminal palmitoylation of SHH by HHAT/SKN. The chain is Protein-cysteine N-palmitoyltransferase HHAT-like protein (Hhatl) from Mus musculus (Mouse).